We begin with the raw amino-acid sequence, 428 residues long: Adenylosuccinate synthetase (428 aa).

GTP-binding positions include G12 to K18 and G40 to T42. The active-site Proton acceptor is D13. Mg(2+)-binding residues include D13 and G40. Residues D13–K16, N38–H41, T130, R144, Q225, T240, and R304 contribute to the IMP site. The active-site Proton donor is the H41. V300–R306 lines the substrate pocket. Residues R306, K332 to D334, and G414 to G416 contribute to the GTP site.

The protein belongs to the adenylosuccinate synthetase family. As to quaternary structure, homodimer. Requires Mg(2+) as cofactor.

The protein localises to the cytoplasm. It catalyses the reaction IMP + L-aspartate + GTP = N(6)-(1,2-dicarboxyethyl)-AMP + GDP + phosphate + 2 H(+). It functions in the pathway purine metabolism; AMP biosynthesis via de novo pathway; AMP from IMP: step 1/2. Plays an important role in the de novo pathway of purine nucleotide biosynthesis. Catalyzes the first committed step in the biosynthesis of AMP from IMP. The protein is Adenylosuccinate synthetase of Clostridium beijerinckii (strain ATCC 51743 / NCIMB 8052) (Clostridium acetobutylicum).